The following is a 1168-amino-acid chain: Zinc finger CCHC domain-containing protein 2 (1168 aa).

Disordered regions lie at residues 1–87, 209–242, 561–693, and 932–978; these read MLRM…GGHA, EGSR…CAKL, KRSL…LGTE, and ATSA…SDST. The span at 43-66 shows a compositional bias: pro residues; that stretch reads PPPPPPTGLPRGPPPPPPSPPRGL. The span at 67-78 shows a compositional bias: low complexity; that stretch reads EPPVASGPTAGA. The span at 216 to 227 shows a compositional bias: acidic residues; sequence EDEPGGDDEQDA. Positions 233–242 are enriched in gly residues; it reads GPEGGGCAKL. Residues 574 to 588 are compositionally biased toward basic and acidic residues; sequence PQVEKEKIKKTENRL. A compositionally biased stretch (low complexity) spans 626–635; the sequence is SSESYSSPSS. Residues 636–655 show a composition bias toward basic and acidic residues; sequence PRHDGRESLESEEEKDRDTD. Residues 932-949 show a composition bias toward polar residues; sequence ATSAQPASTGISPAQSTV. Residues 951–965 are compositionally biased toward pro residues; that stretch reads PAVPTHTPGPAPSPS. The segment covering 966–978 has biased composition (polar residues); sequence PALTHSTAQSDST. The segment at 1121–1138 adopts a CCHC-type zinc-finger fold; the sequence is VSCYNCGVSGHYAQDCKQ.

The chain is Zinc finger CCHC domain-containing protein 2 (Zcchc2) from Rattus norvegicus (Rat).